The following is a 355-amino-acid chain: Natterin-1 (355 aa).

The signal sequence occupies residues 1-18 (MIPSVLLVTLLLLSWTSA). Positions 19–27 (EKDLKVRVA) are excised as a propeptide.

It belongs to the natterin family. Post-translationally, contains 4 disulfide bonds. In terms of tissue distribution, expressed by the venom gland.

The protein localises to the secreted. With respect to regulation, inhibited by tissue-kallikrein inhibitor TKI and trasylol. Plasma kallikrein inhibitor PKSI527 and classical inhibitors of serine-, metallo-, thiol- or aspartate-peptidases evokes a minor inhibition of the peptide digestion. Shows nociceptive, edema-inducing and kininogenase activity with release of kallidin from low molecular weight kininogen. The cleavage occurs at Met-Lys bonds. The sequence is that of Natterin-1 from Thalassophryne nattereri (Copper Joe toadfish).